Reading from the N-terminus, the 682-residue chain is DNA ligase (682 aa).

NAD(+) is bound by residues 38–42, 87–88, and E119; these read DAEYD and SI. K121 serves as the catalytic N6-AMP-lysine intermediate. Residues R142, E181, K298, and K322 each contribute to the NAD(+) site. Zn(2+) is bound by residues C416, C419, C434, and C439. The region spanning 601–682 is the BRCT domain; the sequence is GHEMPLAGKT…LLSLLEPGER (82 aa).

It belongs to the NAD-dependent DNA ligase family. LigA subfamily. Mg(2+) serves as cofactor. Mn(2+) is required as a cofactor.

The catalysed reaction is NAD(+) + (deoxyribonucleotide)n-3'-hydroxyl + 5'-phospho-(deoxyribonucleotide)m = (deoxyribonucleotide)n+m + AMP + beta-nicotinamide D-nucleotide.. Functionally, DNA ligase that catalyzes the formation of phosphodiester linkages between 5'-phosphoryl and 3'-hydroxyl groups in double-stranded DNA using NAD as a coenzyme and as the energy source for the reaction. It is essential for DNA replication and repair of damaged DNA. The sequence is that of DNA ligase from Desulfosudis oleivorans (strain DSM 6200 / JCM 39069 / Hxd3) (Desulfococcus oleovorans).